The sequence spans 301 residues: Probable alpha-L-glutamate ligase (301 aa).

Positions 104–287 (LQLLSRKGVG…VAALVMEFIE (184 aa)) constitute an ATP-grasp domain. Residues Lys141, 178-179 (EY), Asp187, and 211-213 (RSN) contribute to the ATP site. Residues Asp248, Glu260, and Asn262 each contribute to the Mg(2+) site. Residues Asp248, Glu260, and Asn262 each contribute to the Mn(2+) site.

This sequence belongs to the RimK family. Mg(2+) is required as a cofactor. The cofactor is Mn(2+).

The protein is Probable alpha-L-glutamate ligase of Saccharophagus degradans (strain 2-40 / ATCC 43961 / DSM 17024).